The primary structure comprises 407 residues: Succinyl-diaminopimelate desuccinylase (407 aa).

Polar residues predominate over residues 1–10 (MSDIDNNLTS). The disordered stretch occupies residues 1-20 (MSDIDNNLTSQTHQQATHQQ). The span at 11–20 (QTHQQATHQQ) shows a compositional bias: low complexity. Histidine 93 lines the Zn(2+) pocket. Residue aspartate 95 is part of the active site. Aspartate 126 is a binding site for Zn(2+). Glutamate 160 (proton acceptor) is an active-site residue. Residues glutamate 161, glutamate 189, and histidine 379 each coordinate Zn(2+).

This sequence belongs to the peptidase M20A family. DapE subfamily. As to quaternary structure, homodimer. Zn(2+) is required as a cofactor. Co(2+) serves as cofactor.

The enzyme catalyses N-succinyl-(2S,6S)-2,6-diaminopimelate + H2O = (2S,6S)-2,6-diaminopimelate + succinate. It participates in amino-acid biosynthesis; L-lysine biosynthesis via DAP pathway; LL-2,6-diaminopimelate from (S)-tetrahydrodipicolinate (succinylase route): step 3/3. Catalyzes the hydrolysis of N-succinyl-L,L-diaminopimelic acid (SDAP), forming succinate and LL-2,6-diaminopimelate (DAP), an intermediate involved in the bacterial biosynthesis of lysine and meso-diaminopimelic acid, an essential component of bacterial cell walls. In Psychrobacter arcticus (strain DSM 17307 / VKM B-2377 / 273-4), this protein is Succinyl-diaminopimelate desuccinylase.